Reading from the N-terminus, the 1203-residue chain is Rho GTPase-activating protein gacGG (1203 aa).

RCC1 repeat units lie at residues 52-104 (TGEL…AIME), 106-148 (GLLY…VVAD), 155-204 (KRSV…AIVE), 206-255 (NEVF…ARSG), 257-298 (GNVC…VLSE), 299-359 (KGEI…EGRN), and 361-410 (LSVY…YLRG). Residues 316-343 (KLDVNSSPNINSSSGTTTPTTNTTTTTK) form a disordered region. Residues 320–343 (NSSPNINSSSGTTTPTTNTTTTTK) are compositionally biased toward low complexity. The Rho-GAP domain maps to 381-594 (VDIAESMRRK…TIMKQYPLME (214 aa)). Residues 649 to 679 (TLEIKNNQNNQNNQKENNNNNNNINNSNNNN) adopt a coiled-coil conformation. Disordered stretches follow at residues 657–725 (NNQN…TGNI), 746–789 (KDGN…NLSP), and 831–852 (FANSGSSSNNNNSNNSPSLIGS). Composition is skewed to low complexity over residues 746–788 (KDGN…PNLS) and 833–852 (NSGSSSNNNNSNNSPSLIGS). Residues 995–1078 (FDLLEKSMTE…ISNQNLSRVN (84 aa)) are a coiled coil.

The protein localises to the cytoplasm. Its function is as follows. Rho GTPase-activating protein involved in the signal transduction pathway. The polypeptide is Rho GTPase-activating protein gacGG (gacGG) (Dictyostelium discoideum (Social amoeba)).